A 172-amino-acid polypeptide reads, in one-letter code: Myosin regulatory light polypeptide 9 (172 aa).

Residues 1–16 (MSSKRAKAKTTKKRPQ) show a composition bias toward basic residues. The tract at residues 1–20 (MSSKRAKAKTTKKRPQRATS) is disordered. N-acetylserine is present on Ser-2. Thr-19 is modified (phosphothreonine; by MLCK, CIT and ROCK2). Ser-20 is subject to Phosphoserine; by CDC42BP, CIT, MLCK, PAK1, ROCK1, ROCK2, DAPK1, DAPK2 and ZIPK/DAPK3. EF-hand domains lie at 29-64 (SQIQEFKEAFNMIDQNRDGFIDKEDLHDMLASLGKN), 98-133 (DPEDVIRNAFACFDEEASGFIHEDHLRELLTTMGDR), and 134-169 (FTDEEVDEMYREAPIDKKGNFNYVEFTRILKHGAKD). Residues Asp-42, Asn-44, Asp-46, and Asp-53 each contribute to the Ca(2+) site.

In terms of assembly, myosin is a hexamer of 2 heavy chains and 4 light chains: interacts with myosin heavy chain MYO19. Interacts with LUZP1; the interaction results in inhibition of phosphorylation of MYL9 by DAPK3. In terms of processing, phosphorylation increases the actin-activated myosin ATPase activity and thereby regulates the contractile activity. It is required to generate the driving force in the migration of the cells but not necessary for localization of myosin-2 at the leading edge. Phosphorylation is required for myotube formation. Phosphorylated by DAPK3; DAPK3-mediated phosphorylation is inhibited by LUZP1.

Its subcellular location is the cytoplasm. It localises to the cytoskeleton. It is found in the cell cortex. In terms of biological role, myosin regulatory subunit that plays an important role in regulation of both smooth muscle and nonmuscle cell contractile activity via its phosphorylation. Implicated in cytokinesis, receptor capping, and cell locomotion. In myoblasts, regulates PIEZO1-dependent cortical actomyosin assembly involved in myotube formation. This is Myosin regulatory light polypeptide 9 (Myl9) from Mus musculus (Mouse).